A 224-amino-acid polypeptide reads, in one-letter code: Mammalian ependymin-related protein 1 (224 aa).

The first 37 residues, 1-37 (MLTRAPRRLVQGPRETWLLGGLWVWILCGLGMAGSPG), serve as a signal peptide directing secretion. 3 cysteine pairs are disulfide-bonded: C42–C172, C88–C222, and C113–C210. N130 and N182 each carry an N-linked (GlcNAc...) asparagine glycan.

It belongs to the ependymin family. Homodimer. In terms of processing, N-glycosylated; the glycan contains mannose-6-phosphate moieties. As to expression, detected in brain (at protein level).

The protein resides in the lysosome lumen. It localises to the secreted. Functionally, binds anionic lipids and gangliosides at acidic pH. The polypeptide is Mammalian ependymin-related protein 1 (Epdr1) (Rattus norvegicus (Rat)).